We begin with the raw amino-acid sequence, 71 residues long: Translation initiation factor IF-1 (71 aa).

The 71-residue stretch at 1–71 (MKEKNIEMQG…SKGRIIFRSR (71 aa)) folds into the S1-like domain.

Belongs to the IF-1 family. In terms of assembly, component of the 30S ribosomal translation pre-initiation complex which assembles on the 30S ribosome in the order IF-2 and IF-3, IF-1 and N-formylmethionyl-tRNA(fMet); mRNA recruitment can occur at any time during PIC assembly.

The protein resides in the cytoplasm. Functionally, one of the essential components for the initiation of protein synthesis. Stabilizes the binding of IF-2 and IF-3 on the 30S subunit to which N-formylmethionyl-tRNA(fMet) subsequently binds. Helps modulate mRNA selection, yielding the 30S pre-initiation complex (PIC). Upon addition of the 50S ribosomal subunit IF-1, IF-2 and IF-3 are released leaving the mature 70S translation initiation complex. The polypeptide is Translation initiation factor IF-1 (Buchnera aphidicola subsp. Cinara cedri (strain Cc)).